Reading from the N-terminus, the 247-residue chain is tRNA pseudouridine synthase A (247 aa).

Asp-52 functions as the Nucleophile in the catalytic mechanism. Substrate is bound at residue Tyr-113.

Belongs to the tRNA pseudouridine synthase TruA family. As to quaternary structure, homodimer.

It catalyses the reaction uridine(38/39/40) in tRNA = pseudouridine(38/39/40) in tRNA. Its function is as follows. Formation of pseudouridine at positions 38, 39 and 40 in the anticodon stem and loop of transfer RNAs. The protein is tRNA pseudouridine synthase A of Rhizobium meliloti (strain 1021) (Ensifer meliloti).